The primary structure comprises 351 residues: Serine/threonine-protein kinase ZRK1 (351 aa).

Positions 60–347 (FDSSCFVSQD…KELKQIEASL (288 aa)) constitute a Protein kinase domain. ATP-binding positions include 66–74 (VSQDVYYKW) and K87. D191 (proton acceptor) is an active-site residue.

The protein belongs to the protein kinase superfamily. Ser/Thr protein kinase family. ZRK subfamily. Component of a stable high-order oligomeric complex made of RKS1 and RPP13L4/ZAR1 which recruits Xanthomonas campestris effector XopAC/AvrAC-mediated uridylylated PBL2 in the presence of ATP to form a wheel-like pentameric resistosome; this complex triggers immunity toward X.campestris in vascular tissues. Interacts with RPP13L4/ZAR1 and uridylylated PBL2. As to expression, expressed at high levels in germinating seeds and at lower levels in adult leaves.

The catalysed reaction is L-seryl-[protein] + ATP = O-phospho-L-seryl-[protein] + ADP + H(+). The enzyme catalyses L-threonyl-[protein] + ATP = O-phospho-L-threonyl-[protein] + ADP + H(+). Its function is as follows. Serine/threonine-protein kinase that confers a broad-spectrum quantitative disease resistance (QDR) to the pathogenic biotrophic bacteria Xanthomonas campestris (e.g. pv. campestris (Xcc), pv. raphani, pv. armoriaceae and pv. incanae) by restricting bacterial spread to the vascular system from the infection site; X.campestris causes black rot disease in crops. Seems to not have any kinase activity. This is Serine/threonine-protein kinase ZRK1 from Arabidopsis thaliana (Mouse-ear cress).